Reading from the N-terminus, the 95-residue chain is Small ribosomal subunit protein bS6 (95 aa).

It belongs to the bacterial ribosomal protein bS6 family.

In terms of biological role, binds together with bS18 to 16S ribosomal RNA. The sequence is that of Small ribosomal subunit protein bS6 from Thermoanaerobacter pseudethanolicus (strain ATCC 33223 / 39E) (Clostridium thermohydrosulfuricum).